The sequence spans 48 residues: Small, acid-soluble spore protein O (48 aa).

The interval 1 to 23 (MTKRKANHVINGMNAAKSQGNGA) is disordered.

Belongs to the SspO family.

The protein resides in the spore core. The protein is Small, acid-soluble spore protein O of Bacillus pumilus (strain SAFR-032).